The chain runs to 85 residues: Conotoxin Lt28.4 (85 aa).

An N-terminal signal peptide occupies residues 1-21; that stretch reads MPKLEMMLLVLLILPLCYIDA. Positions 22–40 are excised as a propeptide; sequence VGPPPPWNMEDEIIEHWQK.

This sequence belongs to the conotoxin D superfamily. In terms of processing, contains 5 disulfide bonds. As to expression, expressed by the venom duct.

It is found in the secreted. Functionally, probable neurotoxin. The polypeptide is Conotoxin Lt28.4 (Conus litteratus (Lettered cone)).